Here is a 437-residue protein sequence, read N- to C-terminus: MMMLSKSLLSAATAASALAAVLQPVPRASSFVTISGTQFNIDGKVGYFAGTNCYWCSFLTNHADVDSTFSHISSSGLKVVRVWGFNDVNTQPSPGQIWFQKLSATGSTINTGADGLQTLDYVVQSAEQHNLKLIIPFVNNWSDYGGINAYVNAFGGNATTWYTNTAAQTQYRKYVQAVVSRYANSTAIFAWELGNEPRCNGCSTDVIVQWATSVSQYVKSLDSNHLVTLGDEGLGLSTGDGAYPYTYGEGTDFAKNVQIKSLDFGTFHLYPDSWGTNYTWGNGWIQTHAAACLAAGKPCVFEEYGAQQNPCTNEAPWQTTSLTTRGMGGDMFWQWGDTFANGAQSNSDPYTVWYNSSNWQCLVKNHVDAINGGTTTPPPVSSTTTTSSRTSSTPPPPGGSCSPLYGQCGGSGYTGPTCCAQGTCIYSNYWYSQCLNT.

Residues 1 to 19 form the signal peptide; that stretch reads MMMLSKSLLSAATAASALA. Residues 20–27 constitute a propeptide that is removed on maturation; the sequence is AVLQPVPR. The catalytic stretch occupies residues 28–376; the sequence is ASSFVTISGT…VDAINGGTTT (349 aa). A disulfide bridge links Cys-53 with Cys-56. Asn-157 and Asn-184 each carry an N-linked (GlcNAc...) asparagine glycan. Glu-196 functions as the Proton donor/acceptor in the catalytic mechanism. Position 196–198 (196–198) interacts with substrate; it reads EPR. A disulfide bond links Cys-199 and Cys-202. Substrate-binding residues include Glu-232 and Trp-274. N-linked (GlcNAc...) asparagine glycosylation occurs at Asn-277. Cys-292 and Cys-299 are oxidised to a cystine. The active-site Nucleophile is the Glu-303. Cysteines 311 and 361 form a disulfide. Asn-355 carries N-linked (GlcNAc...) asparagine glycosylation. A disordered region spans residues 372 to 399; sequence GGTTTPPPVSSTTTTSSRTSSTPPPPGG. The linker stretch occupies residues 377–399; it reads PPPVSSTTTTSSRTSSTPPPPGG. The span at 381–392 shows a compositional bias: low complexity; sequence SSTTTTSSRTSS. Positions 400–435 constitute a CBM1 domain; it reads SCSPLYGQCGGSGYTGPTCCAQGTCIYSNYWYSQCL.

The protein belongs to the glycosyl hydrolase 5 (cellulase A) family. In terms of assembly, monomer.

The protein resides in the secreted. It carries out the reaction Random hydrolysis of (1-&gt;4)-beta-D-mannosidic linkages in mannans, galactomannans and glucomannans.. Endo-1,4-mannanase that catalyzes the random hydrolysis of (1-&gt;4)-beta-D-mannosidic linkages in mannans and heteromannans. It is a crucial enzyme for depolymerization of seed galactomannans and wood galactoglucomannans. Active against locust bean gum and ivory nut mannan, releasing mainly tri- and disaccharides. Also has transglycosylation activity. Transglycosylation of two mannotrioses into a mannohexaose is the major transglycosylation route. In Hypocrea jecorina (strain ATCC 56765 / BCRC 32924 / NRRL 11460 / Rut C-30) (Trichoderma reesei), this protein is Mannan endo-1,4-beta-mannosidase A.